The primary structure comprises 211 residues: Urease accessory protein UreG (211 aa).

16–23 (GPVGSGKT) provides a ligand contact to GTP.

Belongs to the SIMIBI class G3E GTPase family. UreG subfamily. As to quaternary structure, homodimer. UreD, UreF and UreG form a complex that acts as a GTP-hydrolysis-dependent molecular chaperone, activating the urease apoprotein by helping to assemble the nickel containing metallocenter of UreC. The UreE protein probably delivers the nickel.

It is found in the cytoplasm. Its function is as follows. Facilitates the functional incorporation of the urease nickel metallocenter. This process requires GTP hydrolysis, probably effectuated by UreG. The sequence is that of Urease accessory protein UreG from Janthinobacterium sp. (strain Marseille) (Minibacterium massiliensis).